We begin with the raw amino-acid sequence, 920 residues long: Protein O-mannosyl-transferase TMTC3 (920 aa).

Topologically, residues 1–14 (MLEGKMADINFKEV) are cytoplasmic. The chain crosses the membrane as a helical span at residues 15–35 (TLIVSVVAACYWNSLFCGFVF). The Extracellular portion of the chain corresponds to 36 to 94 (DDVSAILDNKDLHPSTPLKTLFQNDFWGTPMSEERSHKSYRPLTVLTFRLNYLLSELKP). A helical transmembrane segment spans residues 95-115 (MSYHLLNTVFHAVVSVIFLKV). The Cytoplasmic portion of the chain corresponds to 116 to 125 (CRLFLDKRSS). A run of 2 helical transmembrane segments spans residues 126 to 144 (MIAA…AVTG) and 145 to 163 (VVGR…AFLS). At 164-171 (YTKSKGPD) the chain is on the cytoplasmic side. A helical membrane pass occupies residues 172-192 (NSIVWTPIVLTVFLVAVATLC). Residues 193–198 (KEQGIT) lie on the Extracellular side of the membrane. Residues 199–219 (VVGICCVYEVFVAQGYTLPML) form a helical membrane-spanning segment. The Cytoplasmic segment spans residues 220 to 236 (CTVAGQFLRGKGSIPLS). A helical membrane pass occupies residues 237 to 257 (MLQTLVKLIVLMLSTLLLVVV). Residues 258–325 (RVQVIQSQLP…LIESFLDVRN (68 aa)) lie on the Extracellular side of the membrane. A helical transmembrane segment spans residues 326 to 346 (LATFAFFCFLGALGIFSLRYP). At 347–358 (GDSSKTVLMALC) the chain is on the cytoplasmic side. The helical transmembrane segment at 359–379 (LMALPFIPASNLFFPVGFVVA) threads the bilayer. At 380–381 (ER) the chain is on the extracellular side. The chain crosses the membrane as a helical span at residues 382 to 402 (VLYVPSMGFCILVAHGWQKIS). The Cytoplasmic segment spans residues 403–409 (NKSVLKK). A helical transmembrane segment spans residues 410–428 (LSWVCLSMVILTHALKTLH). At 429 to 920 (RNWDWESEYT…EEIERILNGE (492 aa)) the chain is on the extracellular side. TPR repeat units follow at residues 451 to 484 (AKLW…QPDD), 485 to 518 (IGAH…MPQI), 534 to 567 (NVYI…RPDF), 568 to 601 (KQAY…DRNN), 602 to 635 (ADLW…NPKH), 673 to 706 (ANGY…QPDF), 707 to 740 (RSAL…YPDH), 742 to 775 (KGLI…DPSN), and 776 to 809 (VQGK…APHE). N-linked (GlcNAc...) asparagine glycosylation is present at N499. Y508 bears the Phosphotyrosine mark. Residue N546 is glycosylated (N-linked (GlcNAc...) asparagine). The interval 829–897 (VEQPLAPADK…APHKTTKDIK (69 aa)) is disordered. The segment covering 840 to 858 (PGTEEREEIPSEDVKEISS) has biased composition (basic and acidic residues). A compositionally biased stretch (low complexity) spans 867 to 880 (KTNNNRNSKSNKQS). Residues 887–897 (DAPHKTTKDIK) show a composition bias toward basic and acidic residues.

This sequence belongs to the TMTC family.

The protein resides in the membrane. It localises to the endoplasmic reticulum. The enzyme catalyses a di-trans,poly-cis-dolichyl beta-D-mannosyl phosphate + L-seryl-[protein] = 3-O-(alpha-D-mannosyl)-L-seryl-[protein] + a di-trans,poly-cis-dolichyl phosphate + H(+). The catalysed reaction is a di-trans,poly-cis-dolichyl beta-D-mannosyl phosphate + L-threonyl-[protein] = 3-O-(alpha-D-mannosyl)-L-threonyl-[protein] + a di-trans,poly-cis-dolichyl phosphate + H(+). The protein operates within protein modification; protein glycosylation. In terms of biological role, transfers mannosyl residues to the hydroxyl group of serine or threonine residues. The 4 members of the TMTC family are O-mannosyl-transferases dedicated primarily to the cadherin superfamily, each member seems to have a distinct role in decorating the cadherin domains with O-linked mannose glycans at specific regions. Also acts as O-mannosyl-transferase on other proteins such as PDIA3. Involved in the positive regulation of proteasomal protein degradation in the endoplasmic reticulum (ER), and the control of ER stress response. This chain is Protein O-mannosyl-transferase TMTC3, found in Mus musculus (Mouse).